We begin with the raw amino-acid sequence, 251 residues long: Triosephosphate isomerase (251 aa).

9-11 (NWK) provides a ligand contact to substrate. His-94 (electrophile) is an active-site residue. Glu-166 (proton acceptor) is an active-site residue. Residues Gly-172, Ser-211, and 232-233 (GG) contribute to the substrate site.

The protein belongs to the triosephosphate isomerase family. In terms of assembly, homodimer.

It is found in the cytoplasm. The catalysed reaction is D-glyceraldehyde 3-phosphate = dihydroxyacetone phosphate. Its pathway is carbohydrate biosynthesis; gluconeogenesis. It functions in the pathway carbohydrate degradation; glycolysis; D-glyceraldehyde 3-phosphate from glycerone phosphate: step 1/1. Its function is as follows. Involved in the gluconeogenesis. Catalyzes stereospecifically the conversion of dihydroxyacetone phosphate (DHAP) to D-glyceraldehyde-3-phosphate (G3P). This chain is Triosephosphate isomerase, found in Stenotrophomonas maltophilia (strain K279a).